Reading from the N-terminus, the 186-residue chain is Adrenodoxin, mitochondrial (186 aa).

Residues Met-1–Trp-58 constitute a mitochondrion transit peptide. A Phosphoserine modification is found at Ser-61. The residue at position 64 (Lys-64) is an N6-acetyllysine; alternate. Lys-64 bears the N6-succinyllysine; alternate mark. Positions Ile-65 to Val-169 constitute a 2Fe-2S ferredoxin-type domain. [2Fe-2S] cluster-binding residues include Cys-104, Cys-110, Cys-113, and Cys-150. The residue at position 156 (Lys-156) is an N6-succinyllysine. Phosphoserine is present on Ser-175.

It belongs to the adrenodoxin/putidaredoxin family. Interacts with CYP11A1. It depends on [2Fe-2S] cluster as a cofactor.

The protein localises to the mitochondrion matrix. Its function is as follows. Essential for the synthesis of various steroid hormones. Participates in the reduction of mitochondrial cytochrome P450 for steroidogenesis. Transfers electrons from adrenodoxin reductase to CYP11A1, a cytochrome P450 that catalyzes cholesterol side-chain cleavage. Does not form a ternary complex with adrenodoxin reductase and CYP11A1 but shuttles between the two enzymes to transfer electrons. The polypeptide is Adrenodoxin, mitochondrial (FDX1) (Sus scrofa (Pig)).